Consider the following 643-residue polypeptide: DNA-directed RNA polymerase subunit beta' (643 aa).

4 residues coordinate Zn(2+): Cys-83, Cys-85, Cys-98, and Cys-101. Mg(2+) contacts are provided by Asp-480, Asp-482, and Asp-484.

Belongs to the RNA polymerase beta' chain family. RpoC1 subfamily. In plastids the minimal PEP RNA polymerase catalytic core is composed of four subunits: alpha, beta, beta', and beta''. When a (nuclear-encoded) sigma factor is associated with the core the holoenzyme is formed, which can initiate transcription. Mg(2+) is required as a cofactor. It depends on Zn(2+) as a cofactor.

The protein localises to the plastid. Its subcellular location is the organellar chromatophore. The enzyme catalyses RNA(n) + a ribonucleoside 5'-triphosphate = RNA(n+1) + diphosphate. DNA-dependent RNA polymerase catalyzes the transcription of DNA into RNA using the four ribonucleoside triphosphates as substrates. The sequence is that of DNA-directed RNA polymerase subunit beta' from Paulinella chromatophora.